Reading from the N-terminus, the 491-residue chain is NADH-quinone oxidoreductase subunit N (491 aa).

The next 14 membrane-spanning stretches (helical) occupy residues A11–A31, L38–A58, L74–G94, P106–N126, L128–F148, F163–A183, L206–F226, L243–W263, W272–I292, L301–V321, M336–L356, F379–F399, V410–F430, and L465–L485.

It belongs to the complex I subunit 2 family. As to quaternary structure, NDH-1 is composed of 14 different subunits. Subunits NuoA, H, J, K, L, M, N constitute the membrane sector of the complex.

The protein resides in the cell inner membrane. The catalysed reaction is a quinone + NADH + 5 H(+)(in) = a quinol + NAD(+) + 4 H(+)(out). NDH-1 shuttles electrons from NADH, via FMN and iron-sulfur (Fe-S) centers, to quinones in the respiratory chain. The immediate electron acceptor for the enzyme in this species is believed to be ubiquinone. Couples the redox reaction to proton translocation (for every two electrons transferred, four hydrogen ions are translocated across the cytoplasmic membrane), and thus conserves the redox energy in a proton gradient. This Azoarcus sp. (strain BH72) protein is NADH-quinone oxidoreductase subunit N.